The following is a 636-amino-acid chain: MPVITLPDGSKREYDAPISVMGVAADIGPGLAKATLAGVVDGKEVDASFEITQDVSLSIITAKSEEGLEVIRHSTAHLLAQAVKQLFPEAQVTIGPVIEDGFYYDFAYSRAFTPEDLVVIEEKMKELAKADFDVTRRVLPRDEASAYFRGIGEEYKAQIIDSIPANEELSLYKQGDFEDLCRGPHVPSTGKLEYFKLMKVAGAYWRGDSNNEMLTRVYGTAWASKKDLKAYVHRLEEAEKRDHRKLGKKFDLFHIQEEAPGMVFWHPNGWSIYTAIEEYMREVQRLNGYEEIKTPQVVDRSLWERSGHWDKFRDNMFTVESESRDYAVKPMNCPCHVQVFNQGLKSYRDLPLRLAEFGCCHRNEASGTLQGLMRVRGFVQDDAHIFCSESMIQDEVSVFTDLLFKVYKDFGFEDVIIRLSTRPEQRVGSDEVWDKAEKALSDALDAKGLPWQLLPGEGAFYGPKIEFSLKDCLGRVWQCGTIQVDFSMPGRLDAQFVAEDGSRQVPVMLHRAILGSFERFIGILIEEYEGAFPAWLAPTQAVLLNITDNQAEYVKKVENSLKNKGFRVNSDLRNEKIGFKIREHTIQKVPYLLVVGDQEVENNSVAVRGRGGEDLGVMTVDAFTALLEEQISSKAR.

The TGS domain occupies 1 to 61; sequence MPVITLPDGS…TQDVSLSIIT (61 aa). The catalytic stretch occupies residues 242 to 533; it reads DHRKLGKKFD…LIEEYEGAFP (292 aa). 3 residues coordinate Zn(2+): cysteine 333, histidine 384, and histidine 510.

This sequence belongs to the class-II aminoacyl-tRNA synthetase family. As to quaternary structure, homodimer. It depends on Zn(2+) as a cofactor.

It localises to the cytoplasm. The enzyme catalyses tRNA(Thr) + L-threonine + ATP = L-threonyl-tRNA(Thr) + AMP + diphosphate + H(+). Functionally, catalyzes the attachment of threonine to tRNA(Thr) in a two-step reaction: L-threonine is first activated by ATP to form Thr-AMP and then transferred to the acceptor end of tRNA(Thr). Also edits incorrectly charged L-seryl-tRNA(Thr). In Saccharophagus degradans (strain 2-40 / ATCC 43961 / DSM 17024), this protein is Threonine--tRNA ligase.